A 74-amino-acid chain; its full sequence is ATP synthase subunit 9, mitochondrial (74 aa).

2 helical membrane passes run 8–28 and 50–70; these read IGAG…GNVF and ILGF…AFLI.

This sequence belongs to the ATPase C chain family. In terms of assembly, F-type ATPases have 2 components, CF(1) - the catalytic core - and CF(0) - the membrane proton channel. CF(1) has five subunits: alpha(3), beta(3), gamma(1), delta(1), epsilon(1). CF(0) has three main subunits: a, b and c.

It is found in the mitochondrion membrane. This protein is one of the chains of the nonenzymatic membrane component (F0) of mitochondrial ATPase. This is ATP synthase subunit 9, mitochondrial (ATP9) from Brassica napus (Rape).